The chain runs to 208 residues: Uracil phosphoribosyltransferase (208 aa).

5-phospho-alpha-D-ribose 1-diphosphate-binding positions include Arg-78, Arg-103, and 130-138 (DPMLATGGS). Uracil is bound by residues Ile-193 and 198–200 (GDA). Asp-199 lines the 5-phospho-alpha-D-ribose 1-diphosphate pocket.

This sequence belongs to the UPRTase family. The cofactor is Mg(2+).

The catalysed reaction is UMP + diphosphate = 5-phospho-alpha-D-ribose 1-diphosphate + uracil. The protein operates within pyrimidine metabolism; UMP biosynthesis via salvage pathway; UMP from uracil: step 1/1. Its activity is regulated as follows. Allosterically activated by GTP. Its function is as follows. Catalyzes the conversion of uracil and 5-phospho-alpha-D-ribose 1-diphosphate (PRPP) to UMP and diphosphate. The chain is Uracil phosphoribosyltransferase from Sodalis glossinidius (strain morsitans).